The sequence spans 859 residues: DNA mismatch repair protein MutS (859 aa).

617 to 624 is a binding site for ATP; sequence GPNMGGKS. The interval 799–821 is disordered; it reads ETTSLPHEQPRAKPGKPAVPQQS.

Belongs to the DNA mismatch repair MutS family.

Its function is as follows. This protein is involved in the repair of mismatches in DNA. It is possible that it carries out the mismatch recognition step. This protein has a weak ATPase activity. The polypeptide is DNA mismatch repair protein MutS (Pseudomonas syringae pv. syringae (strain B728a)).